The sequence spans 465 residues: SHC-transforming protein 1 (465 aa).

The region spanning 44–227 is the PID domain; sequence MGPGVPYLVR…AGFDGSAWDE (184 aa). Residues 228-369 form a CH1 region; sequence EEEELPDHAY…SMEDQLKREP (142 aa). A disordered region spans residues 281 to 315; that stretch reads VSGAEQDSRKMQPTLQGRERFPVPCSRPPNRPDLF. Residues 370-461 enclose the SH2 domain; it reads WYQGKMSRKE…GSELCLQQPV (92 aa).

As to quaternary structure, interacts with grb2. Highly expressed in oocytes and embryo. Also expressed in liver. Detected in ovary, testis and heart and to a lesser extent in liver (at protein level).

It is found in the cytoplasm. Functionally, implicated in ras-dependent oocyte maturation induced by insulin/IGF1. In Xenopus laevis (African clawed frog), this protein is SHC-transforming protein 1 (shc1).